Consider the following 968-residue polypeptide: Isoleucine--tRNA ligase (968 aa).

The 'HIGH' region motif lies at 68 to 78; that stretch reads PYANGALHMGH. Glu584 contributes to the L-isoleucyl-5'-AMP binding site. A 'KMSKS' region motif is present at residues 625-629; it reads KMSKS. Lys628 lines the ATP pocket. The Zn(2+) site is built by Cys938, Cys941, Cys958, and Cys961.

It belongs to the class-I aminoacyl-tRNA synthetase family. IleS type 1 subfamily. In terms of assembly, monomer. It depends on Zn(2+) as a cofactor.

Its subcellular location is the cytoplasm. The catalysed reaction is tRNA(Ile) + L-isoleucine + ATP = L-isoleucyl-tRNA(Ile) + AMP + diphosphate. Catalyzes the attachment of isoleucine to tRNA(Ile). As IleRS can inadvertently accommodate and process structurally similar amino acids such as valine, to avoid such errors it has two additional distinct tRNA(Ile)-dependent editing activities. One activity is designated as 'pretransfer' editing and involves the hydrolysis of activated Val-AMP. The other activity is designated 'posttransfer' editing and involves deacylation of mischarged Val-tRNA(Ile). The polypeptide is Isoleucine--tRNA ligase (Prochlorococcus marinus (strain MIT 9313)).